A 288-amino-acid chain; its full sequence is Elongation factor Ts (288 aa).

The segment at 82–85 (TDFV) is involved in Mg(2+) ion dislocation from EF-Tu.

This sequence belongs to the EF-Ts family.

Its subcellular location is the cytoplasm. In terms of biological role, associates with the EF-Tu.GDP complex and induces the exchange of GDP to GTP. It remains bound to the aminoacyl-tRNA.EF-Tu.GTP complex up to the GTP hydrolysis stage on the ribosome. In Chlorobaculum tepidum (strain ATCC 49652 / DSM 12025 / NBRC 103806 / TLS) (Chlorobium tepidum), this protein is Elongation factor Ts.